The chain runs to 631 residues: Glutamyl-tRNA(Gln) amidotransferase subunit E (631 aa).

The protein belongs to the GatB/GatE family. GatE subfamily. Heterodimer of GatD and GatE.

It carries out the reaction L-glutamyl-tRNA(Gln) + L-glutamine + ATP + H2O = L-glutaminyl-tRNA(Gln) + L-glutamate + ADP + phosphate + H(+). Allows the formation of correctly charged Gln-tRNA(Gln) through the transamidation of misacylated Glu-tRNA(Gln) in organisms which lack glutaminyl-tRNA synthetase. The reaction takes place in the presence of glutamine and ATP through an activated gamma-phospho-Glu-tRNA(Gln). The GatDE system is specific for glutamate and does not act on aspartate. The chain is Glutamyl-tRNA(Gln) amidotransferase subunit E from Methanococcus maripaludis (strain C7 / ATCC BAA-1331).